A 309-amino-acid chain; its full sequence is MENSTEVTEFILLGLTDDPNLQIPLLLAFLFIYLITLLGNGGMMVIIHSDSHLHTPMYFFLSNLSLVDLGYSSAVAPKTVAALRSGDKAISYDGCAAQFFFFVGFATVECYLLASMAYDRHAAVCRPLHYTTTMTAGVCALLATGSYVSGFLNASIHAAGTFRLSFCGSNEINHFFCDIPPLLALSCSDTRISKLVVFVAGFNVFFTLLVILISYFFICITIQRMHSAEGQKKVFSTCASHLTALSIFYGTIIFMYLQPNSSQSVDTDKIASVFYTVVIPMLNPLIYSLRNKEVKSALWKILNKLYPQY.

The Extracellular segment spans residues 1–26 (MENSTEVTEFILLGLTDDPNLQIPLL). The N-linked (GlcNAc...) asparagine glycan is linked to Asn-3. The helical transmembrane segment at 27-47 (LAFLFIYLITLLGNGGMMVII) threads the bilayer. Residues 48-55 (HSDSHLHT) are Cytoplasmic-facing. Residues 56-76 (PMYFFLSNLSLVDLGYSSAVA) form a helical membrane-spanning segment. Topologically, residues 77 to 95 (PKTVAALRSGDKAISYDGC) are extracellular. A disulfide bridge links Cys-95 with Cys-177. A helical membrane pass occupies residues 96 to 116 (AAQFFFFVGFATVECYLLASM). Topologically, residues 117 to 137 (AYDRHAAVCRPLHYTTTMTAG) are cytoplasmic. Residues 138-158 (VCALLATGSYVSGFLNASIHA) form a helical membrane-spanning segment. The Extracellular portion of the chain corresponds to 159–199 (AGTFRLSFCGSNEINHFFCDIPPLLALSCSDTRISKLVVFV). A helical transmembrane segment spans residues 200–220 (AGFNVFFTLLVILISYFFICI). Over 221-235 (TIQRMHSAEGQKKVF) the chain is Cytoplasmic. A helical transmembrane segment spans residues 236–256 (STCASHLTALSIFYGTIIFMY). Residues 257–270 (LQPNSSQSVDTDKI) are Extracellular-facing. N-linked (GlcNAc...) asparagine glycosylation is present at Asn-260. Residues 271–291 (ASVFYTVVIPMLNPLIYSLRN) traverse the membrane as a helical segment. The Cytoplasmic portion of the chain corresponds to 292 to 309 (KEVKSALWKILNKLYPQY).

This sequence belongs to the G-protein coupled receptor 1 family.

Its subcellular location is the cell membrane. In terms of biological role, odorant receptor. The polypeptide is Olfactory receptor 5B21 (Homo sapiens (Human)).